The following is a 398-amino-acid chain: Meiotically up-regulated gene 126 protein (398 aa).

2 disordered regions span residues 30 to 81 and 119 to 260; these read EEME…QRHR and FESD…NSNS. 2 stretches are compositionally biased toward polar residues: residues 119–135 and 183–199; these read FESDQQESHTGQANFPT and VQENPQAYSKVTQQEPQ. Residues 210-222 show a composition bias toward low complexity; sequence QANQQETSSNQEE. Residues 224 to 236 show a composition bias toward basic and acidic residues; that stretch reads SFDRQETQDDKQK. Over residues 248–260 the composition is skewed to polar residues; sequence RNRNQATITNSNS. The next 4 membrane-spanning stretches (helical) occupy residues 269–289, 305–325, 341–361, and 373–393; these read IFVISLLGYGVYLLAFLDLIE, IFLWCLFGVLMIARGLIYLAL, GACFWVYACIFFLTRVFCFLI, and LEIYSIFAAINVYIIELGAIY.

The protein resides in the membrane. In terms of biological role, has a role in meiosis. In Schizosaccharomyces pombe (strain 972 / ATCC 24843) (Fission yeast), this protein is Meiotically up-regulated gene 126 protein (mug126).